A 372-amino-acid polypeptide reads, in one-letter code: Cytochrome b (372 aa).

Transmembrane regions (helical) follow at residues 25–45, 69–90, 105–125, and 170–190; these read FGSM…FLAI, WIMQ…YIHI, WLSG…GYVL, and FFAL…IHII. Heme b-binding residues include His75 and His89. Heme b-binding residues include His174 and His188. His193 lines the a ubiquinone pocket. The next 4 helical transmembrane spans lie at 218–238, 280–300, 312–332, and 339–358; these read YKDM…LSFL, LGGT…PFTH, LSQT…WTAT, and FITI…IMTP.

The protein belongs to the cytochrome b family. The cytochrome bc1 complex contains 3 respiratory subunits (MT-CYB, CYC1 and UQCRFS1), 2 core proteins (UQCRC1 and UQCRC2) and probably 6 low-molecular weight proteins. Heme b is required as a cofactor.

Its subcellular location is the mitochondrion inner membrane. Its function is as follows. Component of the ubiquinol-cytochrome c reductase complex (complex III or cytochrome b-c1 complex) that is part of the mitochondrial respiratory chain. The b-c1 complex mediates electron transfer from ubiquinol to cytochrome c. Contributes to the generation of a proton gradient across the mitochondrial membrane that is then used for ATP synthesis. In Aspidelaps scutatus (Shield-nose snake), this protein is Cytochrome b (MT-CYB).